The sequence spans 410 residues: Subtilisin-like protease CPC735_003880 (410 aa).

The first 17 residues, 1 to 17, serve as a signal peptide directing secretion; the sequence is MKLLKSSLLLLLPFVTA. Residues 18–118 constitute a propeptide that is removed on maturation; the sequence is NPIPSEDKDI…VTPDRKVYLA (101 aa). The Inhibitor I9 domain maps to 31–118; it reads RYIVTLKDGI…VTPDRKVYLA (88 aa). Positions 127–410 constitute a Peptidase S8 domain; that stretch reads GYNLGHMSSK…IQEMNETVIA (284 aa). Residue Asp-159 is the Charge relay system of the active site. N-linked (GlcNAc...) asparagine glycosylation occurs at Asn-182. His-191 serves as the catalytic Charge relay system. N-linked (GlcNAc...) asparagine glycans are attached at residues Asn-238, Asn-251, and Asn-338. The Charge relay system role is filled by Ser-347. Asn-405 carries an N-linked (GlcNAc...) asparagine glycan.

The protein belongs to the peptidase S8 family.

It is found in the secreted. Secreted subtilisin-like serine protease with keratinolytic activity that contributes to pathogenicity. The polypeptide is Subtilisin-like protease CPC735_003880 (Coccidioides posadasii (strain C735) (Valley fever fungus)).